Reading from the N-terminus, the 347-residue chain is Putative adhesin P1-like protein MPN_099 (347 aa).

Over residues Phe282–Pro300 the composition is skewed to polar residues. Residues Phe282–Phe302 are disordered.

This sequence belongs to the adhesin P1 family.

The protein is Putative adhesin P1-like protein MPN_099 of Mycoplasma pneumoniae (strain ATCC 29342 / M129 / Subtype 1) (Mycoplasmoides pneumoniae).